The chain runs to 700 residues: MAGIAIKLAKDREAAEGLGSHERAIKYLNQDYETLRNECLEAGALFQDPSFPALPSSLGYKELGPYSSKTRGIEWKRPTEICADPQFIIGGATRTDICQGALGDCWLLAAIASLTLNEEILARVVPPDQSFQENYAGIFHFQFWQYGEWVEVVVDDRLPTKDGELLFVHSAEGSEFWSALLEKAYAKINGCYEALSGGATTEGFEDFTGGIAEWYELRKPPPNLFKIIQKALEKGSLLGCSIDITSAADSEAVTYQKLVKGHAYSVTGAEEVESSGSLQKLIRIRNPWGQVEWTGKWNDNCPSWNTVDPEVRANLTERQEDGEFWMSFSDFLRHYSRLEICNLTPDTLTCDSYKKWKLTKMDGNWRRGSTAGGCRNYPNTFWMNPQYLIKLEEEDEDEEDGERGCTFLVGLIQKHRRRQRKMGEDMHTIGFGIYEVPEELTGQTNIHLGKNFFLTTRARERSDTFINLREVLNRFKLPPGEYVLVPSTFEPHKDGDFCIRVFSEKKADYQAVDDEIEANIEEIDANEEDIDDGFRRLFVQLAGEDAEISAFELQTILRRVLAKRQDIKSDGFSIETCKIMVDMLDEDGSGKLGLKEFYILWTKIQKYQKIYREIDVDRSGTMNSYEMRKALEEAGFKLPCQLHQVIVARFADDELIIDFDNFVRCLVRLETLFKIFKQLDPENTGTIQLNLASWLSFSVL.

At A2 the chain carries N-acetylalanine. Positions 2-19 (AGIAIKLAKDREAAEGLG) are cleaved as a propeptide — anchors to the small subunit. The Calpain catalytic domain maps to 45-344 (LFQDPSFPAL…YSRLEICNLT (300 aa)). Residues I89, G91, and D96 each coordinate Ca(2+). C105 is an active-site residue. 3 residues coordinate Ca(2+): E175, Q229, and K230. Residues H262 and N286 contribute to the active site. The Ca(2+) site is built by E292, D299, Q319, and E323. Positions 345–514 (PDTLTCDSYK…KKADYQAVDD (170 aa)) are domain III. Residues 515-529 (EIEANIEEIDANEED) form a linker region. Residues 530 to 700 (IDDGFRRLFV…LASWLSFSVL (171 aa)) form a domain IV region. Ca(2+)-binding residues include A542, D545, E547, E552, D585, D587, S589, K591, E596, D615, D617, S619, T621, E626, D658, and N661. EF-hand domains are found at residues 572 to 605 (FSIE…TKIQ) and 602 to 637 (TKIQ…AGFK).

This sequence belongs to the peptidase C2 family. Forms a heterodimer with a small (regulatory) subunit (CAPNS1). Interacts with CPEB3; this leads to cleavage of CPEB3. Ca(2+) is required as a cofactor. Ubiquitous.

The protein localises to the cytoplasm. Its subcellular location is the cell membrane. The enzyme catalyses Broad endopeptidase specificity.. Activated by 200-1000 micromolar concentrations of calcium and inhibited by calpastatin. Calcium-regulated non-lysosomal thiol-protease which catalyzes limited proteolysis of substrates involved in cytoskeletal remodeling and signal transduction. Proteolytically cleaves MYOC at 'Arg-226'. Proteolytically cleaves CPEB3 following neuronal stimulation which abolishes CPEB3 translational repressor activity, leading to translation of CPEB3 target mRNAs. The protein is Calpain-2 catalytic subunit (Capn2) of Mus musculus (Mouse).